Here is a 534-residue protein sequence, read N- to C-terminus: C-22 sterol desaturase ERG5B (534 aa).

The chain crosses the membrane as a helical span at residues 43–61 (IAVTIFAVLIAYDQFMYIW). Heme is bound at residue Cys-480.

The protein belongs to the cytochrome P450 family. Heme serves as cofactor.

The protein localises to the endoplasmic reticulum membrane. The catalysed reaction is 5-dehydroepisterol + NADPH + O2 + H(+) = ergosta-5,7,22,24(28)-tetraen-3beta-ol + NADP(+) + 2 H2O. It participates in steroid metabolism; ergosterol biosynthesis. C-22 sterol desaturase; part of the third module of ergosterol biosynthesis pathway that includes the late steps of the pathway. ERG5A and ERG5B convert 5-dehydroepisterol into ergosta-5,7,22,24(28)-tetraen-3beta-ol by forming the C-22(23) double bond in the sterol side chain. The third module or late pathway involves the ergosterol synthesis itself through consecutive reactions that mainly occur in the endoplasmic reticulum (ER) membrane. Firstly, the squalene synthase ERG9 catalyzes the condensation of 2 farnesyl pyrophosphate moieties to form squalene, which is the precursor of all steroids. Squalene synthase is crucial for balancing the incorporation of farnesyl diphosphate (FPP) into sterol and nonsterol isoprene synthesis. Secondly, squalene is converted into lanosterol by the consecutive action of the squalene epoxidase ERG1 and the lanosterol synthase ERG7. Then, the delta(24)-sterol C-methyltransferase ERG6 methylates lanosterol at C-24 to produce eburicol. Eburicol is the substrate of the sterol 14-alpha demethylase encoded by CYP51A, CYP51B and CYP51C, to yield 4,4,24-trimethyl ergosta-8,14,24(28)-trienol. CYP51B encodes the enzyme primarily responsible for sterol 14-alpha-demethylation, and plays an essential role in ascospore formation. CYP51A encodes an additional sterol 14-alpha-demethylase, induced on ergosterol depletion and responsible for the intrinsic variation in azole sensitivity. The third CYP51 isoform, CYP51C, does not encode a sterol 14-alpha-demethylase, but is required for full virulence on host wheat ears. The C-14 reductase ERG24 then reduces the C14=C15 double bond which leads to 4,4-dimethylfecosterol. A sequence of further demethylations at C-4, involving the C-4 demethylation complex containing the C-4 methylsterol oxidases ERG25, the sterol-4-alpha-carboxylate 3-dehydrogenase ERG26 and the 3-keto-steroid reductase ERG27, leads to the production of fecosterol via 4-methylfecosterol. ERG28 has a role as a scaffold to help anchor ERG25, ERG26 and ERG27 to the endoplasmic reticulum. The C-8 sterol isomerase ERG2 then catalyzes the reaction which results in unsaturation at C-7 in the B ring of sterols and thus converts fecosterol to episterol. The sterol-C5-desaturases ERG3A and ERG3BB then catalyze the introduction of a C-5 double bond in the B ring to produce 5-dehydroepisterol. The C-22 sterol desaturases ERG5A and ERG5B further convert 5-dehydroepisterol into ergosta-5,7,22,24(28)-tetraen-3beta-ol by forming the C-22(23) double bond in the sterol side chain. Finally, ergosta-5,7,22,24(28)-tetraen-3beta-ol is substrate of the C-24(28) sterol reductase ERG4 to produce ergosterol. The protein is C-22 sterol desaturase ERG5B of Gibberella zeae (strain ATCC MYA-4620 / CBS 123657 / FGSC 9075 / NRRL 31084 / PH-1) (Wheat head blight fungus).